The primary structure comprises 259 residues: uncharacterized protein (259 aa).

This sequence belongs to the chlamydial CPn_0128/CT_035/TC_0305 family.

This is an uncharacterized protein from Chlamydia muridarum (strain MoPn / Nigg).